We begin with the raw amino-acid sequence, 310 residues long: Ribonuclease Z (310 aa).

Positions 63, 65, 67, 68, 141, 212, and 270 each coordinate Zn(2+). The active-site Proton acceptor is the Asp67.

This sequence belongs to the RNase Z family. As to quaternary structure, homodimer. The cofactor is Zn(2+).

The enzyme catalyses Endonucleolytic cleavage of RNA, removing extra 3' nucleotides from tRNA precursor, generating 3' termini of tRNAs. A 3'-hydroxy group is left at the tRNA terminus and a 5'-phosphoryl group is left at the trailer molecule.. In terms of biological role, zinc phosphodiesterase, which displays some tRNA 3'-processing endonuclease activity. Probably involved in tRNA maturation, by removing a 3'-trailer from precursor tRNA. In Limosilactobacillus fermentum (strain NBRC 3956 / LMG 18251) (Lactobacillus fermentum), this protein is Ribonuclease Z.